The primary structure comprises 319 residues: Super small secreted glycoprotein (319 aa).

A signal peptide spans Met1 to Ser32. A glycan (N-linked (GlcNAc...) asparagine; by host) is linked at Asn40. Cystine bridges form between Cys108–Cys135 and Cys121–Cys147. N-linked (GlcNAc...) asparagine; by host glycosylation is found at Asn204, Asn208, Asn238, Asn257, and Asn268.

Belongs to the filoviruses glycoprotein family.

It is found in the secreted. This chain is Super small secreted glycoprotein (GP), found in Sudan ebolavirus (strain Human/Uganda/Gulu/2000) (SEBOV).